A 435-amino-acid polypeptide reads, in one-letter code: Putative F-box/kelch-repeat protein At1g13200 (435 aa).

Positions 1 to 29 (MKDAEKREVIASSSLQRKRNRGRRLRKRR) are disordered. Residues 16-29 (QRKRNRGRRLRKRR) are compositionally biased toward basic residues. Positions 37–82 (LMVPSSLPNDVLEEIFLRFPVKALIRLKSLSKQWRSTIESRSFEER) constitute an F-box domain. Kelch repeat units follow at residues 164 to 217 (SVYV…DYKL), 224 to 270 (DKYI…PASA), 273 to 317 (SVYW…HIDM), and 322 to 368 (NSLC…EKRD).

In Arabidopsis thaliana (Mouse-ear cress), this protein is Putative F-box/kelch-repeat protein At1g13200.